We begin with the raw amino-acid sequence, 270 residues long: NADPH-dependent 7-cyano-7-deazaguanine reductase (270 aa).

79 to 81 lines the substrate pocket; that stretch reads IES. Residue 81-82 coordinates NADPH; sequence SK. The Thioimide intermediate role is filled by Cys-177. The Proton donor role is filled by Asp-184. 216-217 is a substrate binding site; that stretch reads HE. 245–246 is a binding site for NADPH; sequence RG.

The protein belongs to the GTP cyclohydrolase I family. QueF type 2 subfamily. Homodimer.

Its subcellular location is the cytoplasm. It catalyses the reaction 7-aminomethyl-7-carbaguanine + 2 NADP(+) = 7-cyano-7-deazaguanine + 2 NADPH + 3 H(+). The protein operates within tRNA modification; tRNA-queuosine biosynthesis. Catalyzes the NADPH-dependent reduction of 7-cyano-7-deazaguanine (preQ0) to 7-aminomethyl-7-deazaguanine (preQ1). The sequence is that of NADPH-dependent 7-cyano-7-deazaguanine reductase from Acinetobacter baumannii (strain ATCC 17978 / DSM 105126 / CIP 53.77 / LMG 1025 / NCDC KC755 / 5377).